Reading from the N-terminus, the 1231-residue chain is Multifunctional 2-oxoglutarate metabolism enzyme (1231 aa).

Residues 1–41 (MANISSPFGQNEWLVEAMYRKFRDDPSSVDPSWHEFLVDYS) form a 2-oxoglutarate dehydrogenase E1, N-terminal part region. Over residues 24-37 (DDPSSVDPSWHEFL) the composition is skewed to basic and acidic residues. The interval 24–56 (DDPSSVDPSWHEFLVDYSPEPTSQPAAEPTRVT) is disordered. Residues 42 to 88 (PEPTSQPAAEPTRVTSPLVAERAAAAAPQAPPKPADTAAAGNGVVAA) form a linker region. Positions 89 to 337 (LAAKTAVPPP…LRTIHELLLS (249 aa)) are succinyltransferase E2. Histidine 316 (proton acceptor; for succinyltransferase activity) is an active-site residue. A 2-oxoglutarate dehydrogenase E1, C-terminal part region spans residues 338–1231 (DGFWDEVFRE…QQEILDEAFG (894 aa)). Arginine 542 contributes to the thiamine diphosphate binding site. Residues histidine 581 and serine 606 each contribute to the 2-oxoglutarate site. Thiamine diphosphate-binding residues include serine 606, leucine 608, aspartate 649, alanine 650, alanine 651, and asparagine 682. Residue aspartate 649 coordinates Mg(2+). Positions 682 and 684 each coordinate Mg(2+). Residues 787–817 (DISMKEAEDALRDYQGQLERVFNEVRELEKH) are a coiled coil. Histidine 1024 is a binding site for 2-oxoglutarate. 7 residues coordinate acetyl-CoA: threonine 1042, arginine 1058, lysine 1093, serine 1096, glutamine 1146, arginine 1153, and arginine 1154.

Belongs to the 2-oxoacid dehydrogenase family. Kgd subfamily. In terms of assembly, homodimer. The 2-oxoglutarate dehydrogenase (ODH) complex contains multiple copies of three enzymatic components: 2-oxoglutarate dehydrogenase (E1), dihydrolipoamide succinyltransferase (E2) and lipoamide dehydrogenase (E3). The cofactor is Mg(2+). It depends on thiamine diphosphate as a cofactor.

It carries out the reaction glyoxylate + 2-oxoglutarate + H(+) = 2-hydroxy-3-oxoadipate + CO2. It catalyses the reaction 2-oxoglutarate + H(+) = succinate semialdehyde + CO2. The catalysed reaction is N(6)-[(R)-lipoyl]-L-lysyl-[protein] + 2-oxoglutarate + H(+) = N(6)-[(R)-S(8)-succinyldihydrolipoyl]-L-lysyl-[protein] + CO2. The enzyme catalyses N(6)-[(R)-dihydrolipoyl]-L-lysyl-[protein] + succinyl-CoA = N(6)-[(R)-S(8)-succinyldihydrolipoyl]-L-lysyl-[protein] + CoA. It participates in carbohydrate metabolism; tricarboxylic acid cycle; succinate from 2-oxoglutarate (transferase route): step 1/2. It functions in the pathway carbohydrate metabolism; tricarboxylic acid cycle; succinyl-CoA from 2-oxoglutarate (dehydrogenase route): step 1/1. With respect to regulation, alpha-ketoglutarate dehydrogenase and decarboxylase activities are inhibited by unphosphorylated GarA, and allosterically activated by acetyl-CoA, the main substrate of the TCA cycle. Functionally, shows three enzymatic activities that share a first common step, the attack of thiamine-PP on 2-oxoglutarate (alpha-ketoglutarate, KG), leading to the formation of an enamine-thiamine-PP intermediate upon decarboxylation. Thus, displays KGD activity, catalyzing the decarboxylation from five-carbon 2-oxoglutarate to four-carbon succinate semialdehyde (SSA). Also catalyzes C-C bond formation between the activated aldehyde formed after decarboxylation of alpha-ketoglutarate and the carbonyl of glyoxylate (GLX), to yield 2-hydroxy-3-oxoadipate (HOA), which spontaneously decarboxylates to form 5-hydroxylevulinate (HLA). And is also a component of the 2-oxoglutarate dehydrogenase (ODH) complex, that catalyzes the overall conversion of 2-oxoglutarate to succinyl-CoA and CO(2). The KG decarboxylase and KG dehydrogenase reactions provide two alternative, tightly regulated, pathways connecting the oxidative and reductive branches of the TCA cycle. The chain is Multifunctional 2-oxoglutarate metabolism enzyme (kgd) from Mycobacterium bovis (strain ATCC BAA-935 / AF2122/97).